The chain runs to 110 residues: Thiosulfate sulfurtransferase GlpE (110 aa).

Residues 17–105 (RENGAQVVDI…WRSVYPADTS (89 aa)) enclose the Rhodanese domain. C65 functions as the Cysteine persulfide intermediate in the catalytic mechanism.

Belongs to the GlpE family.

The protein resides in the cytoplasm. The enzyme catalyses thiosulfate + hydrogen cyanide = thiocyanate + sulfite + 2 H(+). It carries out the reaction thiosulfate + [thioredoxin]-dithiol = [thioredoxin]-disulfide + hydrogen sulfide + sulfite + 2 H(+). Transferase that catalyzes the transfer of sulfur from thiosulfate to thiophilic acceptors such as cyanide or dithiols. May function in a CysM-independent thiosulfate assimilation pathway by catalyzing the conversion of thiosulfate to sulfite, which can then be used for L-cysteine biosynthesis. The chain is Thiosulfate sulfurtransferase GlpE from Pseudomonas paraeruginosa (strain DSM 24068 / PA7) (Pseudomonas aeruginosa (strain PA7)).